A 317-amino-acid chain; its full sequence is tRNA dimethylallyltransferase (317 aa).

14–21 (GPTAVGKT) serves as a coordination point for ATP. 16–21 (TAVGKT) contacts substrate. Residues 39 to 42 (DSMQ) are interaction with substrate tRNA.

This sequence belongs to the IPP transferase family. In terms of assembly, monomer. Requires Mg(2+) as cofactor.

The enzyme catalyses adenosine(37) in tRNA + dimethylallyl diphosphate = N(6)-dimethylallyladenosine(37) in tRNA + diphosphate. Catalyzes the transfer of a dimethylallyl group onto the adenine at position 37 in tRNAs that read codons beginning with uridine, leading to the formation of N6-(dimethylallyl)adenosine (i(6)A). This Bacillus cereus (strain Q1) protein is tRNA dimethylallyltransferase.